The primary structure comprises 178 residues: Vegetative protein (178 aa).

Disordered regions lie at residues 67–102 (AGRR…AAAG) and 138–158 (NRRP…DIKL). Positions 76 to 90 (PAARSAVTAAPAAVG) are enriched in low complexity.

The chain is Vegetative protein (vegA) from Myxococcus xanthus.